The sequence spans 218 residues: Elongation factor Ts (218 aa).

Residues 82-85 form an involved in Mg(2+) ion dislocation from EF-Tu region; sequence TDFV.

The protein belongs to the EF-Ts family.

The protein resides in the cytoplasm. Its function is as follows. Associates with the EF-Tu.GDP complex and induces the exchange of GDP to GTP. It remains bound to the aminoacyl-tRNA.EF-Tu.GTP complex up to the GTP hydrolysis stage on the ribosome. The protein is Elongation factor Ts (tsf) of Synechocystis sp. (strain ATCC 27184 / PCC 6803 / Kazusa).